We begin with the raw amino-acid sequence, 789 residues long: Cell pattern formation-associated protein stuA (789 aa).

2 disordered regions span residues 50–131 (PALS…NTVG) and 205–224 (PGGVTSSQPGPQPPTTSVSS). Composition is skewed to polar residues over residues 55–69 (PTASQPPISGQSYRT), 76–88 (ASHNASARTSLSG), and 115–131 (LDSSAPQEFSIPQNTVG). The 107-residue stretch at 272 to 378 (RVTATLWEDE…HNIGGLLYHP (107 aa)) folds into the HTH APSES-type domain. The H-T-H motif DNA-binding region spans 306–327 (GTKLLNVAGMTRGRRDGILKSE). Disordered stretches follow at residues 389–459 (QESQ…ASSL), 487–543 (SIDT…YAPQ), and 616–789 (HDSA…ARRR). Polar residues-rich tracts occupy residues 419–438 (LQTPVPSHMSQPHAMTSQSA), 487–529 (SIDT…SKSY), 620–636 (GYNTNRGSYTYTTNPSV), 645–667 (QLASDMSGSPSQQNGSGRMTPRT), and 676–713 (SGYNTPPRSAAVSSLYNSVSETRGASANGTTDNYSVAS). A nuclear localization domain region spans residues 731-758 (KRMREDDDVDQIVRPDSRGAEYESKRRK). The span at 741-754 (QIVRPDSRGAEYES) shows a compositional bias: basic and acidic residues.

It belongs to the EFG1/PHD1/stuA family.

It is found in the nucleus. Its function is as follows. Transcription factor that regulates asexual reproduction. Binds the StuA-response elements (StRE) with the consensus sequence 5'-(A/T)CGCG(T/A)N(A/C)-3' at the promoters of target genes. In Aspergillus flavus (strain ATCC 200026 / FGSC A1120 / IAM 13836 / NRRL 3357 / JCM 12722 / SRRC 167), this protein is Cell pattern formation-associated protein stuA.